The chain runs to 424 residues: Histidinol dehydrogenase (424 aa).

NAD(+) contacts are provided by Tyr121, Gln183, and Asn206. 3 residues coordinate substrate: Ser229, Gln251, and His254. Positions 251 and 254 each coordinate Zn(2+). Residues Glu319 and His320 each act as proton acceptor in the active site. Positions 320, 353, 407, and 412 each coordinate substrate. Asp353 is a Zn(2+) binding site. His412 lines the Zn(2+) pocket.

It belongs to the histidinol dehydrogenase family. It depends on Zn(2+) as a cofactor.

The catalysed reaction is L-histidinol + 2 NAD(+) + H2O = L-histidine + 2 NADH + 3 H(+). It functions in the pathway amino-acid biosynthesis; L-histidine biosynthesis; L-histidine from 5-phospho-alpha-D-ribose 1-diphosphate: step 9/9. Functionally, catalyzes the sequential NAD-dependent oxidations of L-histidinol to L-histidinaldehyde and then to L-histidine. The sequence is that of Histidinol dehydrogenase from Halalkalibacterium halodurans (strain ATCC BAA-125 / DSM 18197 / FERM 7344 / JCM 9153 / C-125) (Bacillus halodurans).